The primary structure comprises 199 residues: Proteasome subunit beta 2 (199 aa).

Residues 1 to 6 (MEKKTG) constitute a propeptide, removed in mature form; by autocatalysis. Threonine 7 serves as the catalytic Nucleophile.

This sequence belongs to the peptidase T1B family. The 20S proteasome core is composed of 14 alpha and 14 beta subunits that assemble into four stacked heptameric rings, resulting in a barrel-shaped structure. The two inner rings, each composed of seven catalytic beta subunits, are sandwiched by two outer rings, each composed of seven alpha subunits. The catalytic chamber with the active sites is on the inside of the barrel. Has a gated structure, the ends of the cylinder being occluded by the N-termini of the alpha-subunits. Is capped at one or both ends by the proteasome regulatory ATPase, PAN.

The protein localises to the cytoplasm. The catalysed reaction is Cleavage of peptide bonds with very broad specificity.. The formation of the proteasomal ATPase PAN-20S proteasome complex, via the docking of the C-termini of PAN into the intersubunit pockets in the alpha-rings, triggers opening of the gate for substrate entry. Interconversion between the open-gate and close-gate conformations leads to a dynamic regulation of the 20S proteasome proteolysis activity. Functionally, component of the proteasome core, a large protease complex with broad specificity involved in protein degradation. This Thermococcus kodakarensis (strain ATCC BAA-918 / JCM 12380 / KOD1) (Pyrococcus kodakaraensis (strain KOD1)) protein is Proteasome subunit beta 2.